The primary structure comprises 482 residues: ATP synthase subunit beta (482 aa).

Position 162 to 169 (162 to 169 (GGAGVGKT)) interacts with ATP.

The protein belongs to the ATPase alpha/beta chains family. As to quaternary structure, F-type ATPases have 2 components, CF(1) - the catalytic core - and CF(0) - the membrane proton channel. CF(1) has five subunits: alpha(3), beta(3), gamma(1), delta(1), epsilon(1). CF(0) has four main subunits: a(1), b(1), b'(1) and c(9-12).

It localises to the cellular thylakoid membrane. The catalysed reaction is ATP + H2O + 4 H(+)(in) = ADP + phosphate + 5 H(+)(out). In terms of biological role, produces ATP from ADP in the presence of a proton gradient across the membrane. The catalytic sites are hosted primarily by the beta subunits. The chain is ATP synthase subunit beta from Synechococcus sp. (strain PCC 6716).